Reading from the N-terminus, the 281-residue chain is ATP synthase gamma chain (281 aa).

The protein belongs to the ATPase gamma chain family. In terms of assembly, F-type ATPases have 2 components, CF(1) - the catalytic core - and CF(0) - the membrane proton channel. CF(1) has five subunits: alpha(3), beta(3), gamma(1), delta(1), epsilon(1). CF(0) has three main subunits: a, b and c.

Its subcellular location is the cell membrane. Produces ATP from ADP in the presence of a proton gradient across the membrane. The gamma chain is believed to be important in regulating ATPase activity and the flow of protons through the CF(0) complex. The protein is ATP synthase gamma chain of Desulfitobacterium hafniense (strain DSM 10664 / DCB-2).